Here is a 282-residue protein sequence, read N- to C-terminus: Protoheme IX farnesyltransferase (282 aa).

The next 9 membrane-spanning stretches (helical) occupy residues 9 to 29, 39 to 59, 79 to 99, 102 to 122, 139 to 159, 165 to 185, 210 to 230, 231 to 251, and 261 to 281; these read LAKPGIIFGNLITLTGGFLLA, LPLFVYVMIGVALMIAAGCVF, LVTGDISVIQATIYGTILLIL, LVLYYLVNLLTLWIIIIGFIV, VLGGISGAIPPVAGYTAVVNI, LALFLILFFWQIPHSYAIAML, IMLFYLALFVVSCALPAVLGS, ADLFSFIVCMLVALFWMYKSI, and VFAKTVFKFSIIVITAICLTM.

This sequence belongs to the UbiA prenyltransferase family. Protoheme IX farnesyltransferase subfamily.

It localises to the cell inner membrane. It catalyses the reaction heme b + (2E,6E)-farnesyl diphosphate + H2O = Fe(II)-heme o + diphosphate. It functions in the pathway porphyrin-containing compound metabolism; heme O biosynthesis; heme O from protoheme: step 1/1. Functionally, converts heme B (protoheme IX) to heme O by substitution of the vinyl group on carbon 2 of heme B porphyrin ring with a hydroxyethyl farnesyl side group. The polypeptide is Protoheme IX farnesyltransferase (Francisella tularensis subsp. novicida (strain U112)).